We begin with the raw amino-acid sequence, 254 residues long: Phosphoglycerate mutase 1 (254 aa).

Substrate-binding positions include 10–17 (RHGESTWN) and 23–24 (SG). The Tele-phosphohistidine intermediate role is filled by histidine 11. Residues serine 14 and serine 23 each carry the phosphoserine modification. Tyrosine 26 is subject to Phosphotyrosine. A Phosphoserine modification is found at serine 31. Residues arginine 62, 89-92 (ERHY), and lysine 100 each bind substrate. The Proton donor/acceptor role is filled by glutamate 89. Lysine 106 carries the post-translational modification N6-acetyllysine. 116 to 117 (RR) provides a ligand contact to substrate. Serine 118 bears the Phosphoserine mark. 187–188 (GN) is a binding site for substrate. The residue at position 251 (lysine 251) is an N6-acetyllysine; alternate. Lysine 251 carries the N6-succinyllysine; alternate modification. Lysine 253 and lysine 254 each carry N6-acetyllysine.

Belongs to the phosphoglycerate mutase family. BPG-dependent PGAM subfamily. As to quaternary structure, homodimer. Post-translationally, acetylated at Lys-253, Lys-253 and Lys-254 under high glucose condition. Acetylation increases catalytic activity. Under glucose restriction SIRT1 levels dramatically increase and it deacetylates the enzyme.

The catalysed reaction is (2R)-2-phosphoglycerate = (2R)-3-phosphoglycerate. It carries out the reaction (2R)-3-phospho-glyceroyl phosphate = (2R)-2,3-bisphosphoglycerate + H(+). Catalyzes the interconversion of 2-phosphoglycerate and 3-phosphoglyceratea crucial step in glycolysis, by using 2,3-bisphosphoglycerate. Also catalyzes the interconversion of (2R)-2,3-bisphosphoglycerate and (2R)-3-phospho-glyceroyl phosphate. In Bos taurus (Bovine), this protein is Phosphoglycerate mutase 1.